The chain runs to 574 residues: Frizzled-7 (574 aa).

Positions 1-32 (MRDPGAAAPLSSLGLCALVLALLGALSAGAGA) are cleaved as a signal peptide. Topologically, residues 33 to 256 (QPYHGEKGIS…EEERRFARLW (224 aa)) are extracellular. Positions 44-163 (PDHGFCQPIS…HGAGEICVGQ (120 aa)) constitute an FZ domain. 5 disulfide bridges follow: cysteine 49-cysteine 110, cysteine 57-cysteine 103, cysteine 94-cysteine 131, cysteine 120-cysteine 160, and cysteine 124-cysteine 148. An N-linked (GlcNAc...) asparagine glycan is attached at asparagine 63. N-linked (GlcNAc...) asparagine glycosylation occurs at asparagine 164. Residues 257-277 (VGVWSVLCCASTLFTVLTYLV) traverse the membrane as a helical segment. Over 278–288 (DMRRFSYPERP) the chain is Cytoplasmic. Residues 289 to 309 (IIFLSGCYFMVAVAHVAGFLL) form a helical membrane-spanning segment. Over 310–336 (EDRAVCVERFSDDGYRTVAQGTKKEGC) the chain is Extracellular. The helical transmembrane segment at 337–357 (TILFMVLYFFGMASSIWWVIL) threads the bilayer. Residues 358-379 (SLTWFLAAGMKWGHEAIEANSQ) lie on the Cytoplasmic side of the membrane. A helical transmembrane segment spans residues 380 to 400 (YFHLAAWAVPAVKTITILAMG). The Extracellular portion of the chain corresponds to 401 to 423 (QVDGDLLSGVCYVGLSSVDALRG). Residues 424–444 (FVLAPLFVYLFIGTSFLLAGF) traverse the membrane as a helical segment. The Cytoplasmic portion of the chain corresponds to 445–470 (VSLFRIRTIMKHDGTKTEKLEKLMVR). A helical transmembrane segment spans residues 471-491 (IGVFSVLYTVPATIVLACYFY). The Extracellular segment spans residues 492–528 (EQAFREHWERTWLLQTCKSYAVPCPPGHFPPMSPDFT). The chain crosses the membrane as a helical span at residues 529-549 (VFMIKYLMTMIVGITTGFWIW). The Cytoplasmic portion of the chain corresponds to 550-574 (SGKTLQSWRRFYHRLSHSSKGETAV). Residues 552–557 (KTLQSW) carry the Lys-Thr-X-X-X-Trp motif, mediates interaction with the PDZ domain of Dvl family members motif. Positions 572 to 574 (TAV) match the PDZ-binding motif.

The protein belongs to the G-protein coupled receptor Fz/Smo family. As to quaternary structure, interacts with MAGI3. Interacts with DVL1. Interacts with CCDC88C/DAPLE; the interaction displaces DVL1 from FZD7, leading to inhibition of canonical Wnt signaling and triggering of non-canonical Wnt responses. Interacts with MYOC. Binds to SDCBP; this interaction is increased by inositol trisphosphate (IP3). Interacts with glypican GPC3. (Microbial infection) Interacts with C.difficile toxin TcdB; frizzled receptors constitute the major host receptors for TcdB in the colonic epithelium. Ubiquitinated by ZNRF3, leading to its degradation by the proteasome. As to expression, high expression in adult skeletal muscle and fetal kidney, followed by fetal lung, adult heart, brain, and placenta. Specifically expressed in squamous cell esophageal carcinomas.

Its subcellular location is the cell membrane. The protein localises to the endosome membrane. Functionally, receptor for Wnt proteins. Most frizzled receptors are coupled to the beta-catenin canonical signaling pathway, which leads to the activation of disheveled proteins, inhibition of GSK-3 kinase, nuclear accumulation of beta-catenin and activation of Wnt target genes. A second signaling pathway involving PKC and calcium fluxes has been seen for some family members, but it is not yet clear if it represents a distinct pathway or if it can be integrated in the canonical pathway, as PKC seems to be required for Wnt-mediated inactivation of GSK-3 kinase. Both pathways seem to involve interactions with G-proteins. Activation by WNT8 induces expression of beta-catenin target genes. Following ligand activation, binds to CCDC88C/DAPLE which displaces DVL1 from FZD7 and leads to inhibition of canonical Wnt signaling, activation of G-proteins by CCDC88C and triggering of non-canonical Wnt responses. May be involved in transduction and intercellular transmission of polarity information during tissue morphogenesis and/or in differentiated tissues. (Microbial infection) Acts as a receptor for C.difficile toxin TcdB in the colonic epithelium. The protein is Frizzled-7 (FZD7) of Homo sapiens (Human).